The following is a 290-amino-acid chain: 4-hydroxybenzoate octaprenyltransferase (290 aa).

8 helical membrane-spanning segments follow: residues 23 to 43, 46 to 66, 99 to 119, 141 to 161, 163 to 183, 212 to 232, 233 to 253, and 268 to 288; these read IGAL…TPGM, LWIL…GCVV, LFVV…AMTI, LPQV…FAAV, ESLP…AVAY, TLII…IGWL, NGLG…FVYQ, and AFMN…MSYW.

This sequence belongs to the UbiA prenyltransferase family. The cofactor is Mg(2+).

The protein resides in the cell inner membrane. The catalysed reaction is all-trans-octaprenyl diphosphate + 4-hydroxybenzoate = 4-hydroxy-3-(all-trans-octaprenyl)benzoate + diphosphate. It functions in the pathway cofactor biosynthesis; ubiquinone biosynthesis. Catalyzes the prenylation of para-hydroxybenzoate (PHB) with an all-trans polyprenyl group. Mediates the second step in the final reaction sequence of ubiquinone-8 (UQ-8) biosynthesis, which is the condensation of the polyisoprenoid side chain with PHB, generating the first membrane-bound Q intermediate 3-octaprenyl-4-hydroxybenzoate. The chain is 4-hydroxybenzoate octaprenyltransferase from Salmonella paratyphi C (strain RKS4594).